An 821-amino-acid polypeptide reads, in one-letter code: LPS-assembly protein LptD (821 aa).

The first 20 residues, 1 to 20 (MGKRLFWTALSGLMVSAAHA), serve as a signal peptide directing secretion.

The protein belongs to the LptD family. As to quaternary structure, component of the lipopolysaccharide transport and assembly complex. Interacts with LptE and LptA.

The protein localises to the cell outer membrane. Its function is as follows. Together with LptE, is involved in the assembly of lipopolysaccharide (LPS) at the surface of the outer membrane. In Chromohalobacter salexigens (strain ATCC BAA-138 / DSM 3043 / CIP 106854 / NCIMB 13768 / 1H11), this protein is LPS-assembly protein LptD.